The sequence spans 3411 residues: Genome polyprotein (3411 aa).

The Cytoplasmic portion of the chain corresponds to 1-104 (MSGRKAQGKT…LSSRKRRSHD (104 aa)). The propeptide at 102-121 (SHDALAVQFLILGMLLMAGG) is ER anchor for the capsid protein C, removed in mature form by serine protease NS3. Residues 105-125 (ALAVQFLILGMLLMAGGVTLV) traverse the membrane as a helical segment. The Extracellular portion of the chain corresponds to 126–244 (RKNRWLLLNV…GERQLQKIER (119 aa)). 2 N-linked (GlcNAc...) asparagine; by host glycosylation sites follow: Asn134 and Asn150. A helical membrane pass occupies residues 245–265 (WLVRNPFFAVTALTIAYLVGS). Topologically, residues 266–270 (NMTQR) are cytoplasmic. A helical transmembrane segment spans residues 271–285 (VVIALLVLAVGPAYS). At 286-730 (AHCIGITDRD…TVFGSAFQGL (445 aa)) the chain is on the extracellular side. 8 cysteine pairs are disulfide-bonded: Cys288-Cys315, Cys345-Cys401, Cys345-Cys406, Cys359-Cys390, Cys377-Cys401, Cys377-Cys406, Cys467-Cys568, and Cys585-Cys615. The segment at 383 to 396 (DRGWGNGCGLFGKG) is fusion peptide. Residues 731 to 751 (FGGLSWITKVIMGAVLIWVGI) traverse the membrane as a helical segment. Residues 752 to 757 (NTRNMT) lie on the Extracellular side of the membrane. Residues 758 to 778 (MSMSMILVGVIMMFLSLGVGA) traverse the membrane as a helical segment. At 779-1132 (DQGCAINFGK…LVRSWVTAGE (354 aa)) the chain is on the extracellular side. 6 disulfide bridges follow: Cys782–Cys793, Cys833–Cys921, Cys957–Cys1002, Cys1058–Cys1107, Cys1069–Cys1091, and Cys1090–Cys1094. Residues Asn908 and Asn986 are each glycosylated (N-linked (GlcNAc...) asparagine; by host). A helical transmembrane segment spans residues 1133 to 1153 (IHAVPFGLVSMMIAMEVVLRK). Topologically, residues 1154 to 1201 (RQGPKQMLVGGVVLLGAMLVGQVTLLDLLKLTVAVGLHFHEMNNGGDA) are cytoplasmic. A helical membrane pass occupies residues 1202-1222 (MYMALIAAFSIRPGLLIGFGL). Over 1223–1287 (RTLWSPRERL…ILPLMALLTP (65 aa)) the chain is Lumenal. A helical membrane pass occupies residues 1288-1308 (VTMAEVRLAAMLFCTVVIIGV). At 1309 to 1355 (LHQNSKDTSMQKTIPLVALTLTSYLGLTQPFLGLCAFLATRLFGRRS) the chain is on the cytoplasmic side. A helical membrane pass occupies residues 1356 to 1376 (IPVNEALAAAGLVGVLAGLAF). The Lumenal segment spans residues 1377 to 1378 (QE). A helical transmembrane segment spans residues 1379–1399 (MENFLGPIAVGGILMMLVSVA). Residues 1400-1456 (GRVDGLELRKLGEVSWEEEAEISGSSARYDVALSEQGEFKLLSEEKVPWDQVVMTSL) lie on the Cytoplasmic side of the membrane. The interacts with and activates NS3 protease stretch occupies residues 1407–1446 (LRKLGEVSWEEEAEISGSSARYDVALSEQGEFKLLSEEKV). An intramembrane region (helical) is located at residues 1457-1477 (ALVGAAIHPFALLLVLAGWLF). Residues 1478-2157 (HVKGARRSGD…RNALSMMPEA (680 aa)) lie on the Cytoplasmic side of the membrane. Residues 1485–1665 (SGDVLWDIPT…EVKEEGKEEL (181 aa)) enclose the Peptidase S7 domain. Catalysis depends on charge relay system; for serine protease NS3 activity residues His1537, Asp1561, and Ser1622. In terms of domain architecture, Helicase ATP-binding spans 1669 to 1825 (PTMLKKGMTT…HSNGEIEDVQ (157 aa)). Positions 1673–1676 (KKGM) are important for RNA-binding. 1682–1689 (FHPGAGKT) is a binding site for ATP. The DEAH box motif lies at 1773 to 1776 (DEAH). In terms of domain architecture, Helicase C-terminal spans 1820 to 1997 (EIEDVQTDIP…VRGGMVAPLY (178 aa)). Lys1877 is subject to N6-acetyllysine; by host. A disordered region spans residues 1942–1961 (AAQRRGRIGRNPNRDGDSYY). The chain crosses the membrane as a helical span at residues 2158 to 2178 (MTIAMLFILAGLLTSGMVIFF). Residues 2179-2186 (MSPKGISR) are Lumenal-facing. Positions 2187 to 2207 (MSMAMGTMAGCGYLMFLGGVK) form an intramembrane region, helical. The Lumenal portion of the chain corresponds to 2208-2209 (PT). A helical transmembrane segment spans residues 2210–2230 (HISYIMLIFFVLMVVVIPEPG). Residues 2231–2241 (QQRSIQDNQVA) are Cytoplasmic-facing. The helical transmembrane segment at 2242–2262 (YLIIGILTLVSVVAANELGML) threads the bilayer. At 2263 to 2293 (EKTKEDLFGKKDLIPSSASPWSWPDLDLKPG) the chain is on the lumenal side. Positions 2294-2314 (AAWTVYVGIVTMLSPMLHHWI) form an intramembrane region, helical. Over 2315–2360 (KVEYGNLSLSGIAQSASVLSFMDKGIPFMKMNISVIILLVSGWNSI) the chain is Lumenal. Residues 2361-2380 (TVMPLLCGIGCAMLHWSLIL) form a helical membrane-spanning segment. Topologically, residues 2381–2421 (PGIKAQQSKLAQRRVFHGVAKNPVVDGNPTVDIEEAPEMPA) are cytoplasmic. The helical transmembrane segment at 2422–2442 (LYEKKLALYLLLALSLASVAM) threads the bilayer. The Lumenal portion of the chain corresponds to 2443-2445 (CRT). The chain crosses the membrane as a helical span at residues 2446 to 2466 (PFSLAEGIVLASAALGPLIEG). Over 2467–3411 (NTSLLWNGPM…DADLQPGELI (945 aa)) the chain is Cytoplasmic. Residues 2507-2771 (GRANGKTLGE…DVILPIGTRS (265 aa)) enclose the mRNA cap 0-1 NS5-type MT domain. Residue Ser2562 coordinates S-adenosyl-L-methionine. Ser2562 is modified (phosphoserine). Catalysis depends on Lys2567, which acts as the For 2'-O-MTase activity. S-adenosyl-L-methionine contacts are provided by Gly2592, Trp2593, Thr2610, Leu2611, Asp2637, and Ile2638. Catalysis depends on Asp2652, which acts as the For 2'-O-MTase activity. Ile2653 is an S-adenosyl-L-methionine binding site. Active-site for 2'-O-MTase activity residues include Lys2688 and Glu2724. Tyr2726 provides a ligand contact to S-adenosyl-L-methionine. The short motif at 2878 to 2911 (RKIMKVVNRWLFRHLAREKNPRLCTKEEFIAKVR) is the Nuclear localization signal element. Positions 2945, 2949, 2954, and 2957 each coordinate Zn(2+). The 153-residue stretch at 3035–3187 (GGFYADDTAG…RPIDDRFGLA (153 aa)) folds into the RdRp catalytic domain. Zn(2+)-binding residues include His3222, Cys3238, and Cys3357.

In the N-terminal section; belongs to the class I-like SAM-binding methyltransferase superfamily. mRNA cap 0-1 NS5-type methyltransferase family. Homodimer. Interacts (via N-terminus) with host EXOC1 (via C-terminus); this interaction results in EXOC1 degradation through the proteasome degradation pathway. In terms of assembly, forms heterodimers with envelope protein E in the endoplasmic reticulum and Golgi. As to quaternary structure, homodimer; in the endoplasmic reticulum and Golgi. Interacts with protein prM. Interacts with non-structural protein 1. Homodimer; Homohexamer when secreted. Interacts with envelope protein E. In terms of assembly, interacts (via N-terminus) with serine protease NS3. As to quaternary structure, forms a heterodimer with serine protease NS3. May form homooligomers. Forms a heterodimer with NS2B. Interacts with non-structural protein 2A (via N-terminus). Interacts with NS4B. Interacts with unphosphorylated RNA-directed RNA polymerase NS5; this interaction stimulates RNA-directed RNA polymerase NS5 guanylyltransferase activity. NS3 interacts with host PDCD6IP; this interaction contributes to virion release. In terms of assembly, interacts with serine protease NS3. As to quaternary structure, homodimer. Interacts with host STAT2; this interaction prevents the establishment of cellular antiviral state. Interacts with serine protease NS3. Interacts with host TRIM23; this interaction leads to NS5 ubiquitination. In terms of processing, specific enzymatic cleavages in vivo yield mature proteins. The nascent capsid protein C contains a C-terminal hydrophobic domain that act as a signal sequence for translocation of prM into the lumen of the ER. Mature capsid protein C is cleaved at a site upstream of this hydrophobic domain by NS3. prM is cleaved in post-Golgi vesicles by a host furin, releasing the mature small envelope protein M, and peptide pr. Non-structural protein 2A-alpha, a C-terminally truncated form of non-structural protein 2A, results from partial cleavage by NS3. Specific enzymatic cleavages in vivo yield mature proteins peptide 2K acts as a signal sequence and is removed from the N-terminus of NS4B by the host signal peptidase in the ER lumen. Signal cleavage at the 2K-4B site requires a prior NS3 protease-mediated cleavage at the 4A-2K site. Post-translationally, cleaved in post-Golgi vesicles by a host furin, releasing the mature small envelope protein M, and peptide pr. This cleavage is incomplete as up to 30% of viral particles still carry uncleaved prM. N-glycosylated. In terms of processing, N-glycosylated. The excreted form is glycosylated and this is required for efficient secretion of the protein from infected cells. Post-translationally, polyubiquitinated; ubiquitination is probably mediated by host TRIM23 and is prerequisite for NS5-STAT2 interaction. NS5 is not ISGylated or sumoylated. Acetylated by host KAT5. Acetylation modulates NS3 RNA-binding and unwinding activities and plays an important positive role for viral replication. In terms of processing, phosphorylated on serines residues. This phosphorylation may trigger NS5 nuclear localization.

It localises to the virion. The protein localises to the host nucleus. Its subcellular location is the host cytoplasm. It is found in the host perinuclear region. The protein resides in the secreted. It localises to the virion membrane. The protein localises to the host endoplasmic reticulum membrane. The enzyme catalyses Selective hydrolysis of -Xaa-Xaa-|-Yaa- bonds in which each of the Xaa can be either Arg or Lys and Yaa can be either Ser or Ala.. It carries out the reaction RNA(n) + a ribonucleoside 5'-triphosphate = RNA(n+1) + diphosphate. The catalysed reaction is a ribonucleoside 5'-triphosphate + H2O = a ribonucleoside 5'-diphosphate + phosphate + H(+). It catalyses the reaction ATP + H2O = ADP + phosphate + H(+). The enzyme catalyses a 5'-end (5'-triphosphoguanosine)-ribonucleoside in mRNA + S-adenosyl-L-methionine = a 5'-end (N(7)-methyl 5'-triphosphoguanosine)-ribonucleoside in mRNA + S-adenosyl-L-homocysteine. It carries out the reaction a 5'-end (N(7)-methyl 5'-triphosphoguanosine)-ribonucleoside in mRNA + S-adenosyl-L-methionine = a 5'-end (N(7)-methyl 5'-triphosphoguanosine)-(2'-O-methyl-ribonucleoside) in mRNA + S-adenosyl-L-homocysteine + H(+). Functionally, plays a role in virus budding by binding to the cell membrane and gathering the viral RNA into a nucleocapsid that forms the core of a mature virus particle. During virus entry, may induce genome penetration into the host cytoplasm after hemifusion induced by the surface proteins. Can migrate to the cell nucleus where it modulates host functions. In terms of biological role, inhibits RNA silencing by interfering with host Dicer. Its function is as follows. Prevents premature fusion activity of envelope proteins in trans-Golgi by binding to envelope protein E at pH6.0. After virion release in extracellular space, gets dissociated from E dimers. Acts as a chaperone for envelope protein E during intracellular virion assembly by masking and inactivating envelope protein E fusion peptide. prM is the only viral peptide matured by host furin in the trans-Golgi network probably to avoid catastrophic activation of the viral fusion activity in acidic Golgi compartment prior to virion release. prM-E cleavage is inefficient, and many virions are only partially matured. These uncleaved prM would play a role in immune evasion. Functionally, may play a role in virus budding. Exerts cytotoxic effects by activating a mitochondrial apoptotic pathway through M ectodomain. May display a viroporin activity. In terms of biological role, binds to host cell surface receptor and mediates fusion between viral and cellular membranes. Envelope protein is synthesized in the endoplasmic reticulum in the form of heterodimer with protein prM. They play a role in virion budding in the ER, and the newly formed immature particle is covered with 60 spikes composed of heterodimer between precursor prM and envelope protein E. The virion is transported to the Golgi apparatus where the low pH causes dissociation of PrM-E heterodimers and formation of E homodimers. prM-E cleavage is inefficient, and many virions are only partially matured. These uncleaved prM would play a role in immune evasion. Its function is as follows. Involved in immune evasion, pathogenesis and viral replication. Once cleaved off the polyprotein, is targeted to three destinations: the viral replication cycle, the plasma membrane and the extracellular compartment. Essential for viral replication. Required for formation of the replication complex and recruitment of other non-structural proteins to the ER-derived membrane structures. Excreted as a hexameric lipoparticle that plays a role against host immune response. Antagonizing the complement function. Binds to the host macrophages and dendritic cells. Inhibits signal transduction originating from Toll-like receptor 3 (TLR3). Component of the viral RNA replication complex that functions in virion assembly and antagonizes the host immune response. Functionally, required cofactor for the serine protease function of NS3. May have membrane-destabilizing activity and form viroporins. In terms of biological role, displays three enzymatic activities: serine protease, NTPase and RNA helicase. NS3 serine protease, in association with NS2B, performs its autocleavage and cleaves the polyprotein at dibasic sites in the cytoplasm: C-prM, NS2A-NS2B, NS2B-NS3, NS3-NS4A, NS4A-2K and NS4B-NS5. NS3 RNA helicase binds RNA and unwinds dsRNA in the 3' to 5' direction. Also plays a role in virus assembly. Its function is as follows. Regulates the ATPase activity of the NS3 helicase activity. NS4A allows NS3 helicase to conserve energy during unwinding. Functions as a signal peptide for NS4B and is required for the interferon antagonism activity of the latter. Functionally, induces the formation of ER-derived membrane vesicles where the viral replication takes place. Inhibits interferon (IFN)-induced host STAT1 phosphorylation and nuclear translocation, thereby preventing the establishment of cellular antiviral state by blocking the IFN-alpha/beta pathway. In terms of biological role, replicates the viral (+) and (-) RNA genome, and performs the capping of genomes in the cytoplasm. NS5 methylates viral RNA cap at guanine N-7 and ribose 2'-O positions. Besides its role in RNA genome replication, also prevents the establishment of cellular antiviral state by blocking the interferon-alpha/beta (IFN-alpha/beta) signaling pathway. IFN-I induces binding of NS5 to host IFN-activated transcription factor STAT2, preventing its transcriptional activity. Host TRIM23 is the E3 ligase that interacts with and polyubiquitinates NS5 to promote its binding to STAT2 and trigger IFN-I signaling inhibition. In Yellow fever virus (isolate Ivory Coast/1999) (YFV), this protein is Genome polyprotein.